A 206-amino-acid polypeptide reads, in one-letter code: MTYIVGLTGGIGSGKTTIANLFTDLGVPLVDADVVAREVVAKDSPLLSKIVEHFGAQILTEQGELNRAALRERVFNHDEDKLWLNNLLHPAIRERMKQKLAEQTAPYTLFVVPLLIENKLTALCDRILVVDVSPQTQLARSAQRDNNNFEQIQRIMNSQVSQQERLKWADDVINNDAELAQNLPHLQQKVLELHQFYLQQAENKNA.

Residues 4 to 204 (IVGLTGGIGS…QFYLQQAENK (201 aa)) enclose the DPCK domain. Position 12–17 (12–17 (GSGKTT)) interacts with ATP.

It belongs to the CoaE family.

It is found in the cytoplasm. It carries out the reaction 3'-dephospho-CoA + ATP = ADP + CoA + H(+). Its pathway is cofactor biosynthesis; coenzyme A biosynthesis; CoA from (R)-pantothenate: step 5/5. Functionally, catalyzes the phosphorylation of the 3'-hydroxyl group of dephosphocoenzyme A to form coenzyme A. The protein is Dephospho-CoA kinase of Haemophilus influenzae (strain ATCC 51907 / DSM 11121 / KW20 / Rd).